Consider the following 352-residue polypeptide: Anthranilate phosphoribosyltransferase (352 aa).

5-phospho-alpha-D-ribose 1-diphosphate is bound by residues Gly-91, Gly-94–Asp-95, Thr-99, Asn-101–Thr-104, Lys-119–Ser-127, and Ser-131. Residue Gly-91 coordinates anthranilate. Ser-103 serves as a coordination point for Mg(2+). Position 122 (Asn-122) interacts with anthranilate. Arg-177 contributes to the anthranilate binding site. Positions 235 and 236 each coordinate Mg(2+).

Belongs to the anthranilate phosphoribosyltransferase family. As to quaternary structure, homodimer. The cofactor is Mg(2+).

The catalysed reaction is N-(5-phospho-beta-D-ribosyl)anthranilate + diphosphate = 5-phospho-alpha-D-ribose 1-diphosphate + anthranilate. It functions in the pathway amino-acid biosynthesis; L-tryptophan biosynthesis; L-tryptophan from chorismate: step 2/5. Its function is as follows. Catalyzes the transfer of the phosphoribosyl group of 5-phosphorylribose-1-pyrophosphate (PRPP) to anthranilate to yield N-(5'-phosphoribosyl)-anthranilate (PRA). The chain is Anthranilate phosphoribosyltransferase from Arthrobacter sp. (strain FB24).